The following is a 418-amino-acid chain: Trimethyllysine dioxygenase, mitochondrial (418 aa).

The Fe cation site is built by His-239, Asp-241, and His-386.

It belongs to the gamma-BBH/TMLD family. In terms of assembly, homodimer. Fe(2+) serves as cofactor. It depends on L-ascorbate as a cofactor.

The protein localises to the mitochondrion matrix. It carries out the reaction N(6),N(6),N(6)-trimethyl-L-lysine + 2-oxoglutarate + O2 = (3S)-3-hydroxy-N(6),N(6),N(6)-trimethyl-L-lysine + succinate + CO2. Its pathway is amine and polyamine biosynthesis; carnitine biosynthesis. Converts trimethyllysine (TML) into hydroxytrimethyllysine (HTML). The sequence is that of Trimethyllysine dioxygenase, mitochondrial (TMLHE) from Gallus gallus (Chicken).